The chain runs to 178 residues: ATP-dependent protease subunit HslV (178 aa).

Thr5 is a catalytic residue. Residues Gly161, Cys164, and Thr167 each coordinate Na(+).

This sequence belongs to the peptidase T1B family. HslV subfamily. In terms of assembly, a double ring-shaped homohexamer of HslV is capped on each side by a ring-shaped HslU homohexamer. The assembly of the HslU/HslV complex is dependent on binding of ATP.

Its subcellular location is the cytoplasm. It carries out the reaction ATP-dependent cleavage of peptide bonds with broad specificity.. Allosterically activated by HslU binding. Protease subunit of a proteasome-like degradation complex believed to be a general protein degrading machinery. This is ATP-dependent protease subunit HslV from Nitratiruptor sp. (strain SB155-2).